We begin with the raw amino-acid sequence, 257 residues long: tRNA pseudouridine synthase A (257 aa).

The active-site Nucleophile is D57. Y115 serves as a coordination point for substrate.

Belongs to the tRNA pseudouridine synthase TruA family. In terms of assembly, homodimer.

It catalyses the reaction uridine(38/39/40) in tRNA = pseudouridine(38/39/40) in tRNA. In terms of biological role, formation of pseudouridine at positions 38, 39 and 40 in the anticodon stem and loop of transfer RNAs. The sequence is that of tRNA pseudouridine synthase A from Lawsonia intracellularis (strain PHE/MN1-00).